A 147-amino-acid polypeptide reads, in one-letter code: 3-dehydroquinate dehydratase (147 aa).

Residue Tyr-26 is the Proton acceptor of the active site. Asn-77, His-83, and Asp-90 together coordinate substrate. His-103 functions as the Proton donor in the catalytic mechanism. Substrate-binding positions include Leu-104–Ser-105 and Arg-114.

Belongs to the type-II 3-dehydroquinase family. In terms of assembly, homododecamer.

The catalysed reaction is 3-dehydroquinate = 3-dehydroshikimate + H2O. It functions in the pathway metabolic intermediate biosynthesis; chorismate biosynthesis; chorismate from D-erythrose 4-phosphate and phosphoenolpyruvate: step 3/7. In terms of biological role, catalyzes a trans-dehydration via an enolate intermediate. This is 3-dehydroquinate dehydratase from Proteus mirabilis (strain HI4320).